A 599-amino-acid polypeptide reads, in one-letter code: Sulfite reductase [NADPH] flavoprotein alpha-component (599 aa).

The 139-residue stretch at isoleucine 64 to valine 202 folds into the Flavodoxin-like domain. FMN is bound by residues serine 70–alanine 75, serine 117–glycine 120, and leucine 153–cysteine 162. An FAD-binding FR-type domain is found at aspartate 234–proline 448. FAD is bound by residues threonine 322, alanine 356, arginine 386–serine 389, threonine 404–glycine 406, tyrosine 410, and glycine 419–serine 422. NADP(+) contacts are provided by residues serine 519–arginine 520, lysine 525–glutamine 529, and aspartate 561. Tyrosine 599 contributes to the FAD binding site.

It belongs to the NADPH-dependent sulphite reductase flavoprotein subunit CysJ family. In the N-terminal section; belongs to the flavodoxin family. This sequence in the C-terminal section; belongs to the flavoprotein pyridine nucleotide cytochrome reductase family. Alpha(8)-beta(8). The alpha component is a flavoprotein, the beta component is a hemoprotein. Requires FAD as cofactor. FMN is required as a cofactor.

It carries out the reaction hydrogen sulfide + 3 NADP(+) + 3 H2O = sulfite + 3 NADPH + 4 H(+). It functions in the pathway sulfur metabolism; hydrogen sulfide biosynthesis; hydrogen sulfide from sulfite (NADPH route): step 1/1. Its function is as follows. Component of the sulfite reductase complex that catalyzes the 6-electron reduction of sulfite to sulfide. This is one of several activities required for the biosynthesis of L-cysteine from sulfate. The flavoprotein component catalyzes the electron flow from NADPH -&gt; FAD -&gt; FMN to the hemoprotein component. The chain is Sulfite reductase [NADPH] flavoprotein alpha-component from Shigella flexneri serotype 5b (strain 8401).